The sequence spans 197 residues: UPF0301 protein BAV3012 (197 aa).

This sequence belongs to the UPF0301 (AlgH) family.

This chain is UPF0301 protein BAV3012, found in Bordetella avium (strain 197N).